A 284-amino-acid polypeptide reads, in one-letter code: Bifunctional protein FolD (284 aa).

NADP(+)-binding positions include 164-166 (GRS) and S189.

Belongs to the tetrahydrofolate dehydrogenase/cyclohydrolase family. Homodimer.

The enzyme catalyses (6R)-5,10-methylene-5,6,7,8-tetrahydrofolate + NADP(+) = (6R)-5,10-methenyltetrahydrofolate + NADPH. The catalysed reaction is (6R)-5,10-methenyltetrahydrofolate + H2O = (6R)-10-formyltetrahydrofolate + H(+). It functions in the pathway one-carbon metabolism; tetrahydrofolate interconversion. Its function is as follows. Catalyzes the oxidation of 5,10-methylenetetrahydrofolate to 5,10-methenyltetrahydrofolate and then the hydrolysis of 5,10-methenyltetrahydrofolate to 10-formyltetrahydrofolate. The protein is Bifunctional protein FolD of Listeria innocua serovar 6a (strain ATCC BAA-680 / CLIP 11262).